We begin with the raw amino-acid sequence, 359 residues long: Tryptophan 2,3-dioxygenase (359 aa).

Substrate contacts are provided by residues 38 to 42 (FIIVH) and R109. H295 lines the heme pocket. T309 contacts substrate.

It belongs to the tryptophan 2,3-dioxygenase family. In terms of assembly, homotetramer. The cofactor is heme.

The catalysed reaction is L-tryptophan + O2 = N-formyl-L-kynurenine. Its pathway is amino-acid degradation; L-tryptophan degradation via kynurenine pathway; L-kynurenine from L-tryptophan: step 1/2. Heme-dependent dioxygenase that catalyzes the oxidative cleavage of the L-tryptophan (L-Trp) pyrrole ring and converts L-tryptophan to N-formyl-L-kynurenine. Catalyzes the oxidative cleavage of the indole moiety. The sequence is that of Tryptophan 2,3-dioxygenase from Bdellovibrio bacteriovorus (strain ATCC 15356 / DSM 50701 / NCIMB 9529 / HD100).